A 635-amino-acid polypeptide reads, in one-letter code: MASQYAAELCALLVEDNFGELFARIFSTLTRYDRLNLPRLKFHSGLSNRQLLPALAAMIQQHLVYHYTSYDDGVTYYEANLQSAYYLVRAGKILEFVEERLGKYAATVMSSIMYLGHAQVSHLENLPELQPEQSHTNGVDKEHDEVDGDEEQPNGLSGDHSDQQPALLHPTLKVLAAHGYIIRVREAQFQSHADNILDAERVLKSRPEIKAMKGKRMEEAVIEGTLELLKERTDGDLTRGLMVQGVPRGAKRKHGSKSADAPNKKARVDFASVDEDDEQDEEENEWSDDEMGYDTTPMESGLVVRVNYNKLDVALRNCRFIQIAEQDASPATAEVYECLLRRIEYQTHQCRDTVEIPREGEEGEQYSVPIALSAVAEDVDPRLDLSGSIGPMEISQPDNRRGKRPLEDDVNGTNHEGANGLSSGGNRTFEVDQHLCLLAQPPHNLTSKRIVSGLITWTVEFRHLARKLRHLELERMIEARYGDVALRVVRVLHAKGKLDEKRLQEISLLPFKDLRQVLASMQAGGFVDLQEVPRDAQRQPSRTIYLWYYDPDRICNSVLQDTYKAMSRCFQRLRFERNRLKEFLEKTERSDVKGNEERYLSEGELALLQQWKAKEALLIGEVARLDEMVAVMRDY.

Disordered regions lie at residues 131–164 (PEQS…SDQQ), 246–295 (VPRG…GYDT), and 386–424 (SGSI…LSSG). Residues 272-292 (SVDEDDEQDEEENEWSDDEMG) are compositionally biased toward acidic residues. Residues 398–407 (DNRRGKRPLE) show a composition bias toward basic and acidic residues. Over residues 411–424 (NGTNHEGANGLSSG) the composition is skewed to polar residues. The leucine-zipper stretch occupies residues 562-583 (TYKAMSRCFQRLRFERNRLKEF).

This sequence belongs to the RNA polymerase beta chain family. As to quaternary structure, component of the RNA polymerase III (Pol III) complex consisting of 17 subunits.

Its subcellular location is the nucleus. Its function is as follows. DNA-dependent RNA polymerase catalyzes the transcription of DNA into RNA using the four ribonucleoside triphosphates as substrates. Specific core component of RNA polymerase III which synthesizes small RNAs, such as 5S rRNA and tRNAs. This Aspergillus clavatus (strain ATCC 1007 / CBS 513.65 / DSM 816 / NCTC 3887 / NRRL 1 / QM 1276 / 107) protein is DNA-directed RNA polymerase III subunit rpc3 (rpc82).